The sequence spans 78 residues: Omega-conotoxin PnVIA (78 aa).

A signal peptide spans 1–22; that stretch reads MKLTCMMIIAVLFLTAWTFVMA. Residues 23–45 constitute a propeptide that is removed on maturation; the sequence is DDPRDEPEARDEMNPAASKLNER. 3 disulfides stabilise this stretch: Cys-47–Cys-65, Cys-54–Cys-69, and Cys-64–Cys-73. The residue at position 76 (Gln-76) is a Glutamine amide.

In terms of tissue distribution, expressed by the venom duct.

It localises to the secreted. In terms of biological role, omega-conotoxins act at presynaptic membranes, they bind and block voltage-gated calcium channels (Cav). Acts on high voltage-activated (HVA) calcium currents in molluscan neurons. The polypeptide is Omega-conotoxin PnVIA (Conus pennaceus (Feathered cone)).